Here is a 666-residue protein sequence, read N- to C-terminus: ATP-dependent zinc metalloprotease FtsH (666 aa).

Residues 1–6 (MKSETG) lie on the Cytoplasmic side of the membrane. A helical membrane pass occupies residues 7 to 27 (YMGFVVVLVFMVLLALQLATL). Over 28 to 116 (SAPATQIAYS…TRYRGADDDT (89 aa)) the chain is Periplasmic. A helical transmembrane segment spans residues 117-137 (WIGTLASWIVPIAVFALVWNL). Residues 138 to 666 (MLRRPRGGLQ…ADNADHSVPQ (529 aa)) lie on the Cytoplasmic side of the membrane. 210 to 217 (GAPGTGKT) contributes to the ATP binding site. Residue His-432 participates in Zn(2+) binding. Glu-433 is an active-site residue. Residues His-436 and Asp-509 each contribute to the Zn(2+) site. The interval 612–666 (NDEPTPEPGARDPGGDAAKRSGIGAAPAKPPAEVGSAELRDPARKADNADHSVPQ) is disordered. 2 stretches are compositionally biased toward basic and acidic residues: residues 620-630 (GARDPGGDAAK) and 649-666 (ELRDPARKADNADHSVPQ).

It in the central section; belongs to the AAA ATPase family. This sequence in the C-terminal section; belongs to the peptidase M41 family. Homohexamer. The cofactor is Zn(2+).

It is found in the cell inner membrane. Its function is as follows. Acts as a processive, ATP-dependent zinc metallopeptidase for both cytoplasmic and membrane proteins. Plays a role in the quality control of integral membrane proteins. This is ATP-dependent zinc metalloprotease FtsH from Burkholderia pseudomallei (strain 1710b).